Reading from the N-terminus, the 469-residue chain is Cysteine--tRNA ligase (469 aa).

Residue Cys-33 coordinates Zn(2+). A 'HIGH' region motif is present at residues 35 to 45; that stretch reads ATVQGLPHIGH. Positions 211, 236, and 240 each coordinate Zn(2+). Residues 267–271 carry the 'KMSKS' region motif; it reads KMSKS. Lys-270 is an ATP binding site.

It belongs to the class-I aminoacyl-tRNA synthetase family. In terms of assembly, monomer. Zn(2+) serves as cofactor.

It localises to the cytoplasm. The enzyme catalyses tRNA(Cys) + L-cysteine + ATP = L-cysteinyl-tRNA(Cys) + AMP + diphosphate. The polypeptide is Cysteine--tRNA ligase (cysS) (Mycobacterium tuberculosis (strain CDC 1551 / Oshkosh)).